The primary structure comprises 317 residues: Ribosomal protein L11 methyltransferase (317 aa).

S-adenosyl-L-methionine is bound by residues Thr-158, Gly-179, Asp-201, and Asn-244.

Belongs to the methyltransferase superfamily. PrmA family.

The protein localises to the cytoplasm. The catalysed reaction is L-lysyl-[protein] + 3 S-adenosyl-L-methionine = N(6),N(6),N(6)-trimethyl-L-lysyl-[protein] + 3 S-adenosyl-L-homocysteine + 3 H(+). In terms of biological role, methylates ribosomal protein L11. This Streptococcus uberis (strain ATCC BAA-854 / 0140J) protein is Ribosomal protein L11 methyltransferase.